The chain runs to 443 residues: Xaa-Pro dipeptidase (443 aa).

Mn(2+) is bound by residues aspartate 246, aspartate 257, histidine 339, glutamate 384, and glutamate 423.

Belongs to the peptidase M24B family. Bacterial-type prolidase subfamily. Requires Mn(2+) as cofactor.

The enzyme catalyses Xaa-L-Pro dipeptide + H2O = an L-alpha-amino acid + L-proline. In terms of biological role, splits dipeptides with a prolyl residue in the C-terminal position. The polypeptide is Xaa-Pro dipeptidase (Pectobacterium atrosepticum (strain SCRI 1043 / ATCC BAA-672) (Erwinia carotovora subsp. atroseptica)).